A 517-amino-acid polypeptide reads, in one-letter code: Bifunctional purine biosynthesis protein PurH (517 aa).

An MGS-like domain is found at 1-145 (MSPLALVSVS…KNHKDVSVLV (145 aa)).

The protein belongs to the PurH family.

The catalysed reaction is (6R)-10-formyltetrahydrofolate + 5-amino-1-(5-phospho-beta-D-ribosyl)imidazole-4-carboxamide = 5-formamido-1-(5-phospho-D-ribosyl)imidazole-4-carboxamide + (6S)-5,6,7,8-tetrahydrofolate. It carries out the reaction IMP + H2O = 5-formamido-1-(5-phospho-D-ribosyl)imidazole-4-carboxamide. Its pathway is purine metabolism; IMP biosynthesis via de novo pathway; 5-formamido-1-(5-phospho-D-ribosyl)imidazole-4-carboxamide from 5-amino-1-(5-phospho-D-ribosyl)imidazole-4-carboxamide (10-formyl THF route): step 1/1. It functions in the pathway purine metabolism; IMP biosynthesis via de novo pathway; IMP from 5-formamido-1-(5-phospho-D-ribosyl)imidazole-4-carboxamide: step 1/1. The polypeptide is Bifunctional purine biosynthesis protein PurH (Prochlorococcus marinus (strain MIT 9312)).